The following is a 170-amino-acid chain: Adenine phosphoribosyltransferase (170 aa).

Belongs to the purine/pyrimidine phosphoribosyltransferase family. As to quaternary structure, homodimer.

It localises to the cytoplasm. The catalysed reaction is AMP + diphosphate = 5-phospho-alpha-D-ribose 1-diphosphate + adenine. The protein operates within purine metabolism; AMP biosynthesis via salvage pathway; AMP from adenine: step 1/1. Its function is as follows. Catalyzes a salvage reaction resulting in the formation of AMP, that is energically less costly than de novo synthesis. This Carboxydothermus hydrogenoformans (strain ATCC BAA-161 / DSM 6008 / Z-2901) protein is Adenine phosphoribosyltransferase.